The chain runs to 1088 residues: RNA-directed RNA polymerase (1088 aa).

The RdRp catalytic domain occupies 501–687 (LSYGDVTRFL…AKRYIAGGKI (187 aa)).

This sequence belongs to the reoviridae RNA-directed RNA polymerase family. As to quaternary structure, interacts with VP3 (Potential). Interacts with VP2; this interaction activates VP1. Interacts with NSP5; this interaction is probably necessary for the formation of functional virus factories. Interacts with NSP2; this interaction is weak. The cofactor is Mg(2+).

The protein localises to the virion. The enzyme catalyses RNA(n) + a ribonucleoside 5'-triphosphate = RNA(n+1) + diphosphate. In terms of biological role, RNA-directed RNA polymerase that is involved in both transcription and genome replication. Together with VP3 capping enzyme, forms an enzyme complex positioned near the channels situated at each of the five-fold vertices of the core. Following infection, the outermost layer of the virus is lost, leaving a double-layered particle (DLP) made up of the core and VP6 shell. VP1 then catalyzes the transcription of fully conservative plus-strand genomic RNAs that are extruded through the DLP's channels into the cytoplasm where they function as mRNAs for translation of viral proteins. One copy of each of the viral (+)RNAs is also recruited during core assembly, together with newly synthesized polymerase complexes and VP2. The polymerase of these novo-formed particles catalyzes the synthesis of complementary minus-strands leading to dsRNA formation. To do so, the polymerase specifically recognizes and binds 4 bases 5'-UGUG-3' in the conserved 3'-sequence of plus-strand RNA templates. VP2 presumably activates the autoinhibited VP1-RNA complex to coordinate packaging and genome replication. Once dsRNA synthesis is complete, the polymerase switches to the transcriptional mode, thus providing secondary transcription. In Homo sapiens (Human), this protein is RNA-directed RNA polymerase.